The chain runs to 461 residues: Carboxypeptidase Rv3627c (461 aa).

Positions 1–28 are cleaved as a signal peptide; the sequence is MGPTRWRKSTHVVVGAAVLAFVAVVVAA. Residue Ser-114 is the Acyl-ester intermediate of the active site. The active-site Proton acceptor is the Lys-117. Residue Ser-295 is part of the active site.

Belongs to the peptidase S13 family.

Carboxypeptidase that cleaves terminal D-alanine from peptidoglycan in the mycobacterial cell wall. May cleave L-Lys-D-Ala and/or D-Ala-D-Ala peptide bonds. Exerts important effects on mycobacterial cell morphology and cell division. The polypeptide is Carboxypeptidase Rv3627c (Mycobacterium tuberculosis (strain ATCC 25618 / H37Rv)).